The chain runs to 631 residues: 1,4-alpha-glucan branching enzyme GlgB (631 aa).

Asp309 functions as the Nucleophile in the catalytic mechanism. Glu362 acts as the Proton donor in catalysis.

The protein belongs to the glycosyl hydrolase 13 family. GlgB subfamily. In terms of assembly, monomer.

It catalyses the reaction Transfers a segment of a (1-&gt;4)-alpha-D-glucan chain to a primary hydroxy group in a similar glucan chain.. The protein operates within glycan biosynthesis; glycogen biosynthesis. In terms of biological role, catalyzes the formation of the alpha-1,6-glucosidic linkages in glycogen by scission of a 1,4-alpha-linked oligosaccharide from growing alpha-1,4-glucan chains and the subsequent attachment of the oligosaccharide to the alpha-1,6 position. This chain is 1,4-alpha-glucan branching enzyme GlgB, found in Marinobacter nauticus (strain ATCC 700491 / DSM 11845 / VT8) (Marinobacter aquaeolei).